The following is a 708-amino-acid chain: Radial spoke head protein 6 homolog A (708 aa).

Disordered regions lie at residues 1–94, 376–407, 495–514, and 663–708; these read MGEP…GYTP, ETHG…IIPK, EEEG…FEEN, and GPEI…DLED. The segment covering 10 to 32 has biased composition (polar residues); that stretch reads PSQTRRASQGSERARSQEYSQPL. A compositionally biased stretch (low complexity) spans 47–56; the sequence is RGSRSSQGSQ. The segment covering 495–504 has biased composition (acidic residues); that stretch reads EEEGDEEEEG. Positions 680–690 are enriched in low complexity; it reads LKAAQEQALAA. Acidic residues predominate over residues 691-708; that stretch reads AEEEEEDEEEEEDEDLED.

This sequence belongs to the flagellar radial spoke RSP4/6 family. In terms of assembly, component of the axonemal radial spoke 1 (RS1) and 2 (RS2) complexes, at least composed of spoke head proteins RSPH1, RSPH3, RSPH9 and the cilia-specific component RSPH4A or sperm-specific component RSPH6A, spoke stalk proteins RSPH14, DNAJB13, DYDC1, ROPN1L and NME5, and the RS1 complex-specific anchor protein IQUB. Interacts with RSPH1. Interacts with RSPH3B. Interacts with RSPH4A. Interacts with RSPH9. Interacts with RSPH10B. In terms of processing, phosphorylated by PKA. Phosphorylation increases in capacitated sperm. In terms of tissue distribution, expressed in sperm and testis (at protein level).

Its subcellular location is the cytoplasm. It localises to the cytoskeleton. The protein resides in the flagellum axoneme. In terms of biological role, functions as part of radial spoke complexes in the axoneme of sperm flagella that play an important part in motility. The triple radial spokes (RS1, RS2 and RS3) are required to modulate beating of the sperm flagellum. This is Radial spoke head protein 6 homolog A from Mus musculus (Mouse).